A 352-amino-acid polypeptide reads, in one-letter code: MDYQVSSPTYDIDYYTSEPCQKINVKQIAARLLPPLYSLVFIFGFVGNMLVILILINCKRLKSMTDIYLLNLAISDLFFLLTVPFWAHYAAAQWDFGNTMCQLLTGLYFIGFFSGIFFIILLTIDRYLAIVHAVFALKARTVTFGVVTSVITWVVAVFASLPGIIFTRSQKEGLHYTCSSHFPYSQYQFWKNFQTLKIVILGLVLPLLVMVICYSGILKTLLRCRNEKKRHRAVRLIFTIMIVYFLFWAPYNIVLLLNTFQEFFGLNNCSSSNRLDQAMQVTETLGMTHCCINPIIYAFVGEKFRNYLLVFFQKHIAKHFCKCCSIFQQEAPERASSVYTRSTGEQEISVGL.

At 1–30 (MDYQVSSPTYDIDYYTSEPCQKINVKQIAA) the chain is on the extracellular side. A Sulfotyrosine modification is found at Y3. O-linked (GalNAc...) serine glycosylation is found at S6 and S7. Sulfotyrosine occurs at positions 10, 14, and 15. 2 disulfide bridges follow: C20–C269 and C101–C178. A helical transmembrane segment spans residues 31-58 (RLLPPLYSLVFIFGFVGNMLVILILINC). Residues 59-68 (KRLKSMTDIY) are Cytoplasmic-facing. A helical membrane pass occupies residues 69–89 (LLNLAISDLFFLLTVPFWAHY). Topologically, residues 90 to 102 (AAAQWDFGNTMCQ) are extracellular. The helical transmembrane segment at 103 to 124 (LLTGLYFIGFFSGIFFIILLTI) threads the bilayer. Residues 125 to 141 (DRYLAIVHAVFALKART) are Cytoplasmic-facing. A helical membrane pass occupies residues 142–166 (VTFGVVTSVITWVVAVFASLPGIIF). At 167 to 198 (TRSQKEGLHYTCSSHFPYSQYQFWKNFQTLKI) the chain is on the extracellular side. The chain crosses the membrane as a helical span at residues 199 to 218 (VILGLVLPLLVMVICYSGIL). The Cytoplasmic segment spans residues 219 to 235 (KTLLRCRNEKKRHRAVR). Residues 236-260 (LIFTIMIVYFLFWAPYNIVLLLNTF) form a helical membrane-spanning segment. The Extracellular portion of the chain corresponds to 261 to 277 (QEFFGLNNCSSSNRLDQ). Residues 278–301 (AMQVTETLGMTHCCINPIIYAFVG) form a helical membrane-spanning segment. The Cytoplasmic segment spans residues 302–352 (EKFRNYLLVFFQKHIAKHFCKCCSIFQQEAPERASSVYTRSTGEQEISVGL). S-palmitoyl cysteine attachment occurs at residues C321, C323, and C324. Phosphoserine; by BARK1 occurs at positions 336, 337, 342, and 349.

The protein belongs to the G-protein coupled receptor 1 family. In terms of assembly, interacts with PRAF2. Efficient ligand binding to CCL3/MIP-1alpha and CCL4/MIP-1beta requires sulfation, O-glycosylation and sialic acid modifications. Glycosylation on Ser-6 is required for efficient binding of CCL4. Interacts with GRK2. Interacts with ARRB1 and ARRB2. Interacts with CNIH4. Interacts with S100A4; this interaction stimulates T-lymphocyte chemotaxis. Post-translationally, sulfated on at least 2 of the N-terminal tyrosines. Sulfation is required for efficient binding of the chemokines, CCL3 and CCL4. In terms of processing, palmitoylation in the C-terminal is important for cell surface expression. Phosphorylation on serine residues in the C-terminal is stimulated by binding CC chemokines especially by APO-RANTES. Post-translationally, O-glycosylated, but not N-glycosylated. Ser-6 appears to be the major site even if Ser-7 may be also O-glycosylated. Also sialylated glycans present which contribute to chemokine binding. Thr-16 and Ser-17 may also be glycosylated and, if so, with small moieties such as a T-antigen.

Its subcellular location is the cell membrane. In terms of biological role, receptor for a number of inflammatory CC-chemokines including CCL3/MIP-1-alpha, CCL4/MIP-1-beta and RANTES and subsequently transduces a signal by increasing the intracellular calcium ion level. May play a role in the control of granulocytic lineage proliferation or differentiation. Participates in T-lymphocyte migration to the infection site by acting as a chemotactic receptor. This Symphalangus syndactylus (Siamang) protein is C-C chemokine receptor type 5 (CCR5).